The following is a 396-amino-acid chain: L-lactate dehydrogenase (396 aa).

Residues 1 to 380 (MIISAASDYR…TQDSLVQVLG (380 aa)) enclose the FMN hydroxy acid dehydrogenase domain. Tyr24 provides a ligand contact to substrate. FMN-binding residues include Ser106 and Gln127. Residue Tyr129 participates in substrate binding. Thr155 lines the FMN pocket. Arg164 is a substrate binding site. Lys251 provides a ligand contact to FMN. His275 acts as the Proton acceptor in catalysis. Substrate is bound at residue Arg278. 306 to 330 (DSGIRNGLDVVRMIALGADTVLLGR) provides a ligand contact to FMN.

It belongs to the FMN-dependent alpha-hydroxy acid dehydrogenase family. Requires FMN as cofactor.

It is found in the cell inner membrane. It catalyses the reaction (S)-lactate + A = pyruvate + AH2. Functionally, catalyzes the conversion of L-lactate to pyruvate. Is coupled to the respiratory chain. The polypeptide is L-lactate dehydrogenase (Escherichia coli O45:K1 (strain S88 / ExPEC)).